A 63-amino-acid chain; its full sequence is Small ribosomal subunit protein eS17 (63 aa).

The protein belongs to the eukaryotic ribosomal protein eS17 family.

In Methanococcus maripaludis (strain C7 / ATCC BAA-1331), this protein is Small ribosomal subunit protein eS17.